The primary structure comprises 547 residues: Chaperonin GroEL 1 (547 aa).

Residues 30 to 33 (TLGP), K51, 87 to 91 (DGTTT), G415, and D496 contribute to the ATP site.

This sequence belongs to the chaperonin (HSP60) family. Forms a cylinder of 14 subunits composed of two heptameric rings stacked back-to-back. Interacts with the co-chaperonin GroES.

The protein resides in the cytoplasm. It carries out the reaction ATP + H2O + a folded polypeptide = ADP + phosphate + an unfolded polypeptide.. In terms of biological role, together with its co-chaperonin GroES, plays an essential role in assisting protein folding. The GroEL-GroES system forms a nano-cage that allows encapsulation of the non-native substrate proteins and provides a physical environment optimized to promote and accelerate protein folding. This is Chaperonin GroEL 1 from Rhodopseudomonas palustris (strain BisB18).